Reading from the N-terminus, the 119-residue chain is Large ribosomal subunit protein bL20 (119 aa).

The protein belongs to the bacterial ribosomal protein bL20 family.

In terms of biological role, binds directly to 23S ribosomal RNA and is necessary for the in vitro assembly process of the 50S ribosomal subunit. It is not involved in the protein synthesizing functions of that subunit. The polypeptide is Large ribosomal subunit protein bL20 (Clostridium botulinum (strain ATCC 19397 / Type A)).